The sequence spans 142 residues: Putative pre-16S rRNA nuclease (142 aa).

Belongs to the YqgF nuclease family.

It localises to the cytoplasm. Functionally, could be a nuclease involved in processing of the 5'-end of pre-16S rRNA. This Staphylococcus saprophyticus subsp. saprophyticus (strain ATCC 15305 / DSM 20229 / NCIMB 8711 / NCTC 7292 / S-41) protein is Putative pre-16S rRNA nuclease.